Here is a 173-residue protein sequence, read N- to C-terminus: Large ribosomal subunit protein uL16 (173 aa).

Belongs to the universal ribosomal protein uL16 family.

This Methanococcus maripaludis (strain C5 / ATCC BAA-1333) protein is Large ribosomal subunit protein uL16.